We begin with the raw amino-acid sequence, 614 residues long: Vitamin B12 transporter BtuB (614 aa).

An N-terminal signal peptide occupies residues 1 to 20 (MIKKASLLTACSVTAFSAWA). Positions 26 to 33 (DTLVVTAN) match the TonB box motif. Residues 38–152 (PRSTVLAPTT…IGGVVNIITT (115 aa)) form the TBDR plug domain. Residues leucine 83, serine 85, asparagine 92, and 110 to 111 (VS) each bind cyanocob(III)alamin. One can recognise a TBDR beta-barrel domain in the interval 155 to 614 (HPGTEISAGW…EYTLSGSYTF (460 aa)). 3 beta stranded membrane passes run 158 to 165 (TEISAGWG), 169 to 178 (YQNYDVSTQQ), and 184 to 195 (TRVTLLGDYAHT). Ca(2+)-binding residues include aspartate 199, glutamine 211, aspartate 213, and aspartate 215. Transmembrane regions (beta stranded) follow at residues 217–227 (FLSKTLYGALE) and 232–248 (DVWSGFVRGYGYDNRTN). Residues tyrosine 249 and aspartate 250 each contribute to the Ca(2+) site. Alanine 251 serves as a coordination point for cyanocob(III)alamin. Aspartate 261 serves as a coordination point for Ca(2+). Transmembrane regions (beta stranded) follow at residues 263-277 (RKLYSQSWDAGLRYN), 279-296 (ELIKSQLITSYSHSKDYN), 309-325 (TLDEMKQYTVQWANNII), 328-337 (HGNIGAGVDW), 353-369 (YDQRNTGIYLTGLQQVG), 371-381 (FTFEGAGRSDD), 385-400 (FGRHGTWQTSAGWEFI), 403-417 (YRFIASYGTSYKAPN), 434-443 (KSKQWEGAFE), 449-458 (VNWRISGYRN), 473-490 (YYNEGKARIKGVEATANF), 494-509 (PLTHTVSYDYVDARNA), 517-529 (RRAKQQVKYQLDW), and 535-550 (DWGITYQYLGTRYDKD). Threonine 309 contributes to the cyanocob(III)alamin binding site. Cyanocob(III)alamin is bound at residue arginine 517. Residue tyrosine 551 participates in cyanocob(III)alamin binding. 3 beta stranded membrane-spanning segments follow: residues 558–572 (TVKMGGVSLWDLAVA), 585–596 (IANLFDKDYETV), and 602–614 (AGREYTLSGSYTF). A TonB C-terminal box motif is present at residues 597 to 614 (YGYQTAGREYTLSGSYTF).

Belongs to the TonB-dependent receptor family. BtuB (TC 1.B.14.3.1) subfamily.

It is found in the cell outer membrane. Involved in the active translocation of vitamin B12 (cyanocobalamin) across the outer membrane to the periplasmic space. It derives its energy for transport by interacting with the trans-periplasmic membrane protein TonB. This Escherichia coli O1:K1 / APEC protein is Vitamin B12 transporter BtuB.